The sequence spans 511 residues: Centrosomal protein CCDC61 (511 aa).

The segment at M1 to P144 is head domain. The stretch at A147–A272 forms a coiled coil. Disordered stretches follow at residues T306–P403 and R447–T486. Residues G315–D335 show a composition bias toward basic and acidic residues. Over residues G338–G352 the composition is skewed to polar residues. Positions D366–S378 are enriched in basic and acidic residues.

This sequence belongs to the CCDC61 family. Forms homodimers (via head domain).

Its subcellular location is the cytoplasm. It localises to the cytoskeleton. The protein resides in the microtubule organizing center. It is found in the centrosome. The protein localises to the centriolar satellite. Its subcellular location is the cilium basal body. In terms of biological role, microtubule-binding centrosomal protein required for centriole cohesion, independently of the centrosome-associated protein/CEP250 and rootletin/CROCC linker. In interphase, required for anchoring microtubule at the mother centriole subdistal appendages and for centrosome positioning. During mitosis, may be involved in spindle assembly and chromatin alignment by regulating the organization of spindle microtubules into a symmetrical structure. Plays a non-essential role in ciliogenesis. The sequence is that of Centrosomal protein CCDC61 from Danio rerio (Zebrafish).